Here is a 199-residue protein sequence, read N- to C-terminus: Thymidine kinase (199 aa).

Residues glycine 23–threonine 30 and aspartate 95–glutamine 98 contribute to the ATP site. Glutamate 96 acts as the Proton acceptor in catalysis. Residues cysteine 152, cysteine 155, cysteine 184, and cysteine 187 each contribute to the Zn(2+) site.

This sequence belongs to the thymidine kinase family. Homotetramer.

The protein localises to the cytoplasm. The catalysed reaction is thymidine + ATP = dTMP + ADP + H(+). This is Thymidine kinase from Bacteroides thetaiotaomicron (strain ATCC 29148 / DSM 2079 / JCM 5827 / CCUG 10774 / NCTC 10582 / VPI-5482 / E50).